A 152-amino-acid polypeptide reads, in one-letter code: MALTERQEALLKQSWEVLKQNIPGHSLRLFALIIEAAPESKYVFSFLKDSNEIPENNPKLKAHAAVIFKTICESATELRQKGQAVWDNNTLKRLGSIHLKNKITDPHFEVMKGALLGTIKEAVKENWSDEMGCAWTEAYNQLVATIKAEMKE.

The region spanning Ala-2–Lys-151 is the Globin domain. Positions Glu-35–Glu-39 match the Homodimerization motif. Positions 45, 59, 63, 93, and 98 each coordinate heme b. Residues Asp-105–Gly-117 carry the Homodimerization motif.

It belongs to the plant globin family. In terms of assembly, homodimer. Heme b is required as a cofactor. Root nodules.

The protein resides in the cytoplasm. It localises to the nucleus. It carries out the reaction Fe(III)-heme b-[protein] + nitric oxide + H2O = Fe(II)-heme b-[protein] + nitrite + 2 H(+). Functionally, phytoglobin that reduces nitrite to nitric oxide (NO) under anoxic conditions (e.g. during flooding or in waterlogged soil) and upon root nodulation. Required for general plant development and during nodulation, especially for the onset of symbiosis. Monitors nitric oxide (NO) levels during early phase of the nitrogen-fixing symbiosis and buffers oxygen in functioning nodules. May not function as an oxygen storage or transport protein. Has an unusually high affinity for O(2) through a hexacoordinate heme iron because of a very low dissociation constant. The protein is Anaerobic nitrite reductase SYMA of Casuarina glauca (Swamp oak).